A 123-amino-acid polypeptide reads, in one-letter code: Proteasome assembly chaperone 4 (123 aa).

Belongs to the PSMG4 family. As to quaternary structure, interacts with PSMG3. Associates with alpha subunits of the 20S proteasome.

Its function is as follows. Chaperone protein which promotes assembly of the 20S proteasome. In Homo sapiens (Human), this protein is Proteasome assembly chaperone 4.